A 187-amino-acid polypeptide reads, in one-letter code: Putative glutathione-dependent formaldehyde-activating enzyme (187 aa).

The CENP-V/GFA domain maps to 20–166 (FPGGKLYCHC…FESVGLKTYD (147 aa)). Zn(2+) contacts are provided by Cys27, Cys29, Cys48, Cys50, Cys53, Cys95, and Cys98.

It belongs to the Gfa family. Zn(2+) is required as a cofactor.

It carries out the reaction S-(hydroxymethyl)glutathione = glutathione + formaldehyde. The protein operates within one-carbon metabolism; formaldehyde degradation; formate from formaldehyde (glutathione route): step 1/3. In terms of biological role, catalyzes the condensation of formaldehyde and glutathione to S-hydroxymethylglutathione. The chain is Putative glutathione-dependent formaldehyde-activating enzyme from Talaromyces marneffei (strain ATCC 18224 / CBS 334.59 / QM 7333) (Penicillium marneffei).